Here is a 596-residue protein sequence, read N- to C-terminus: RNA-binding protein involved in heterochromatin assembly dri1 (596 aa).

S176 carries the phosphoserine modification. Residues 236–314 enclose the RRM domain; it reads KIVHVAGLTN…RMLEIIPSST (79 aa). The RanBP2-type 1 zinc-finger motif lies at 335–364; sequence RPGDWNCPMCGFSNFQRRTSCFRCSFPGPT. Residue S429 is modified to Phosphoserine. RanBP2-type zinc fingers lie at residues 437–468 and 552–580; these read RAGDWKCGSEGCGYHNFAKNVCCLRCGASRAT and DQGDWLCECGFTNFRRRSNCLRCNAPHYS.

Interacts with dpb4. Interacts with chp1.

It localises to the chromosome. It is found in the nucleus. Its subcellular location is the cytoplasm. The protein resides in the cytoplasmic granule. Its function is as follows. Mediates heterochromatin assembly by promoting RNAi-mediated heterochromatin silencing and histone deacetylation. Binds pericetromeric transcripts and recruits the RNA-induced transcriptional silencing (RITS) complex to heterochromatin. Recruits sir2 to chromatin to promote deacetylation of 'Lys-9' of histone H3. Involved in bipolar spindle assembly during mitosis. Required for proper localization of kinesin-14/Klp2 on the spindle microtubules. This is RNA-binding protein involved in heterochromatin assembly dri1 from Schizosaccharomyces pombe (strain 972 / ATCC 24843) (Fission yeast).